Reading from the N-terminus, the 177-residue chain is Ribosome maturation factor RimP (177 aa).

Residues 153–171 (VEFNRKDTKNDNQTEHDNK) show a composition bias toward basic and acidic residues. Positions 153-177 (VEFNRKDTKNDNQTEHDNKTEEEEA) are disordered.

The protein belongs to the RimP family.

The protein resides in the cytoplasm. Its function is as follows. Required for maturation of 30S ribosomal subunits. The polypeptide is Ribosome maturation factor RimP (Streptomyces coelicolor (strain ATCC BAA-471 / A3(2) / M145)).